Here is a 558-residue protein sequence, read N- to C-terminus: MAALTRDPQFQKLQQWYREHGSELNLRRLFDADKDRFNHFSLTLNTNHGHILLDYSKNLVTEDVMRMLVDLAKSRGVEAARERMFNGEKINYTEGRAVLHVALRNRSNTPILVDGKDVMPEVNKVLDKMKSFCQRVRSGDWKGYTGKTITDVINIGIGGSDLGPLMVTEALKPYSSEGPRVWYVSNIDGTHIAKTLTQLNPESSLFIIASKTFTTQETITNAETAKEWFLQAAKDPSAVAKHFVALSTNTTKVKEFGIDPQNMFEFWDWVGGRYSLWSAIGLSIALHVGFDNFEQLLSGAHWMDQHFRTTPLEKNAPVLLALLGIWYINCFGCETHAMLPYDQYLHRFAAYFQQGDMESNGKYITKSGTRVDHQTGPIVWGEPGTNGQHAFYQLIHQGTKMIPCDFLIPVQTQHPIRKGLHHKILLANFLAQTEALMRGKSTDEARKELQAAGKSPEDLERLLPHKVFEGNRPTNSIVFTKLTPFMLGALVAMYEHKIFVQGIIWDINSFDQWGVELGKQLAKKIEPELDGSAQVTSHDASTNGLINFIKQQREARVQ.

Ala2 is subject to N-acetylalanine. The residue at position 12 (Lys12) is an N6-acetyllysine. Lys34 is subject to N6-(2-hydroxyisobutyryl)lysine. Ser107 bears the Phosphoserine mark. At Thr109 the chain carries Phosphothreonine. Position 142 is an N6-acetyllysine (Lys142). 159-160 (GS) provides a ligand contact to D-glucose 6-phosphate. Residue Ser185 is modified to Phosphoserine; by CK2. Residue 210 to 215 (SKTFTT) coordinates D-glucose 6-phosphate. Thr250 is modified (phosphothreonine). Positions 354, 358, and 389 each coordinate D-glucose 6-phosphate. The active-site Proton donor is Glu358. His389 is a catalytic residue. Lys454 carries the N6-acetyllysine; alternate modification. Lys454 is modified (N6-malonyllysine; alternate). Lys454 carries the N6-succinyllysine; alternate modification. Ser455 carries the phosphoserine modification. Lys519 provides a ligand contact to D-glucose 6-phosphate. Residue Lys519 is part of the active site.

This sequence belongs to the GPI family. Homodimer; in the catalytically active form. Monomer in the secreted form. In terms of processing, phosphorylation at Ser-185 by CK2 has been shown to decrease enzymatic activity and may contribute to secretion by a non-classical secretory pathway. ISGylated.

Its subcellular location is the cytoplasm. It is found in the secreted. The catalysed reaction is alpha-D-glucose 6-phosphate = beta-D-fructose 6-phosphate. Its pathway is carbohydrate degradation; glycolysis; D-glyceraldehyde 3-phosphate and glycerone phosphate from D-glucose: step 2/4. Its function is as follows. In the cytoplasm, catalyzes the conversion of glucose-6-phosphate to fructose-6-phosphate, the second step in glycolysis, and the reverse reaction during gluconeogenesis. Besides it's role as a glycolytic enzyme, also acts as a secreted cytokine: acts as an angiogenic factor (AMF) that stimulates endothelial cell motility. Acts as a neurotrophic factor, neuroleukin, for spinal and sensory neurons. It is secreted by lectin-stimulated T-cells and induces immunoglobulin secretion. This Macaca fascicularis (Crab-eating macaque) protein is Glucose-6-phosphate isomerase.